A 613-amino-acid polypeptide reads, in one-letter code: Activating transcription factor 3 (613 aa).

Disordered regions lie at residues Arg-77 to Gln-115 and Lys-133 to Ala-218. A compositionally biased stretch (low complexity) spans Gly-85–Pro-105. Positions Thr-138–Gln-147 are enriched in polar residues. Residues Asn-158–Asn-175 are compositionally biased toward low complexity. Residues Asp-178–Ser-191 are compositionally biased toward acidic residues. In terms of domain architecture, bZIP spans Glu-205 to His-268. Residues Arg-207 to Arg-229 are basic motif. Positions Leu-233–Leu-261 are leucine-zipper. Residues Pro-337–Pro-446 are disordered. Low complexity predominate over residues Gln-356–Gln-368. The segment covering Ser-369–Leu-389 has biased composition (polar residues). A compositionally biased stretch (low complexity) spans Gly-402–Pro-446.

It belongs to the bZIP family. ATF subfamily. As to quaternary structure, interacts with Jra/jun; the interaction enhances the DNA-binding activity of Atf3. Moderate expression in some regions of the larval nervous system, the ring gland and imaginal disks. High expression in larval gut, excretory malpighian tubules, salivary glands, and, to a lesser extent, the fat body where levels are approximately 2.5-fold less than the gut.

It is found in the nucleus. Its function is as follows. Transcription factor which binds to the cAMP response element (CRE). Regulates metabolic and innate immune homeostasis, possibly by controlling appropriate expression of genes involved in peritrophic matrix composition and ensuring the normal digestive and immune function of the gut. Required for the expression of odorant receptors Or43b and Or47b. This Drosophila melanogaster (Fruit fly) protein is Activating transcription factor 3.